The primary structure comprises 365 residues: tRNA(Met) cytidine acetate ligase (365 aa).

Residues 7–20, Gly96, Asn152, and Arg175 contribute to the ATP site; that span reads IAEFNPFHNGHKYL.

It belongs to the TmcAL family.

The protein resides in the cytoplasm. The enzyme catalyses cytidine(34) in elongator tRNA(Met) + acetate + ATP = N(4)-acetylcytidine(34) in elongator tRNA(Met) + AMP + diphosphate. Its function is as follows. Catalyzes the formation of N(4)-acetylcytidine (ac(4)C) at the wobble position of elongator tRNA(Met), using acetate and ATP as substrates. First activates an acetate ion to form acetyladenylate (Ac-AMP) and then transfers the acetyl group to tRNA to form ac(4)C34. The chain is tRNA(Met) cytidine acetate ligase from Streptococcus pneumoniae (strain 70585).